A 620-amino-acid polypeptide reads, in one-letter code: 1-deoxy-D-xylulose-5-phosphate synthase (620 aa).

Residues H80 and G121–S123 each bind thiamine diphosphate. D152 is a Mg(2+) binding site. Thiamine diphosphate-binding positions include G153 to A154, N181, Y288, and E370. N181 contributes to the Mg(2+) binding site.

It belongs to the transketolase family. DXPS subfamily. As to quaternary structure, homodimer. Mg(2+) is required as a cofactor. Thiamine diphosphate serves as cofactor.

The enzyme catalyses D-glyceraldehyde 3-phosphate + pyruvate + H(+) = 1-deoxy-D-xylulose 5-phosphate + CO2. It functions in the pathway metabolic intermediate biosynthesis; 1-deoxy-D-xylulose 5-phosphate biosynthesis; 1-deoxy-D-xylulose 5-phosphate from D-glyceraldehyde 3-phosphate and pyruvate: step 1/1. Catalyzes the acyloin condensation reaction between C atoms 2 and 3 of pyruvate and glyceraldehyde 3-phosphate to yield 1-deoxy-D-xylulose-5-phosphate (DXP). The polypeptide is 1-deoxy-D-xylulose-5-phosphate synthase (Shigella boydii serotype 18 (strain CDC 3083-94 / BS512)).